Here is a 185-residue protein sequence, read N- to C-terminus: Elongation factor P (185 aa).

Belongs to the elongation factor P family.

It localises to the cytoplasm. It participates in protein biosynthesis; polypeptide chain elongation. Its function is as follows. Involved in peptide bond synthesis. Stimulates efficient translation and peptide-bond synthesis on native or reconstituted 70S ribosomes in vitro. Probably functions indirectly by altering the affinity of the ribosome for aminoacyl-tRNA, thus increasing their reactivity as acceptors for peptidyl transferase. This Streptococcus pyogenes serotype M4 (strain MGAS10750) protein is Elongation factor P.